We begin with the raw amino-acid sequence, 417 residues long: Methyltransferase/ribosomally synthesized cyclic peptide lentinulin A precursor ledMA (417 aa).

Residues 1–251 (METPTLNKSG…GVSTFYIPPK (251 aa)) form a methyltransferase domain region. Catalysis depends on residues Arg-72, Tyr-76, and Tyr-98. The S-adenosyl-L-methionine site is built by Tyr-98, His-100, Val-103, Ala-130, Gln-172, Ala-213, Ser-244, and Thr-245. The segment at 252–378 (ERKEINVDII…WAFRCAMKEM (127 aa)) is clasp domain. The precursor leader stretch occupies residues 379–399 (PISLLDNAKQSMEEASEQGFP). Ile-401 bears the N-methylisoleucine mark. 2 positions are modified to N-methylvaline: Val-403 and Val-404. An N-methylglycine modification is found at Gly-405. Val-406 and Val-407 each carry N-methylvaline. Gly-408 carries the N-methylglycine modification. Val-410 bears the N-methylvaline mark. Gly-411 is subject to N-methylglycine. N-methylvaline is present on Val-413.

The protein in the N-terminal section; belongs to the precorrin methyltransferase family. In terms of assembly, homodimer. LedMA automethylates at Ile-401, Val-403, Val-404, Gly-405, Val-406, Val-407, Gly-408, Val-410, Gly-411 and Val-413 before being processed by the prolyloligopeptidase ledP which likely forms a peptidyl ester upon removal of the follower propeptide, which then undergoes macrocyclization with the N-terminus of the modified core peptide. Peptide backbone alpha-N-methylations change the physicochemical properties of amide bonds to provide structural constraints and other favorable characteristics including biological membrane permeability to peptides.

It participates in mycotoxin biosynthesis. Functionally, fusion protein of the methyltransferase ledM and the lentinulin A core peptide; part of the gene cluster that mediates the biosynthesis of lentinulin A, a highly methylated cyclic dodecapeptide with nematodicidal activity. Lentinulin A derives from the C-terminus of the ledMA protein, and it is the ledMA protein that methylates its own C-terminus using S-adenosyl methionine (SAM). The C-terminus is subsequently cleaved off and macrocyclized by the prolyloligopeptidase ledP to give the final product. The protein is Methyltransferase/ribosomally synthesized cyclic peptide lentinulin A precursor ledMA of Lentinula edodes (Shiitake mushroom).